Reading from the N-terminus, the 276-residue chain is Hemin import ATP-binding protein HmuV (276 aa).

Residues 2-259 (LTAHHLDVAR…AHIAQCYGFA (258 aa)) form the ABC transporter domain. 34–41 (GRNGAGKS) is a binding site for ATP.

The protein belongs to the ABC transporter superfamily. Heme (hemin) importer (TC 3.A.1.14.5) family. The complex is composed of two ATP-binding proteins (HmuV), two transmembrane proteins (HmuU) and a solute-binding protein (HmuT).

It localises to the cell inner membrane. In terms of biological role, part of the ABC transporter complex HmuTUV involved in hemin import. Responsible for energy coupling to the transport system. This Burkholderia cenocepacia (strain HI2424) protein is Hemin import ATP-binding protein HmuV.